A 60-amino-acid polypeptide reads, in one-letter code: Large ribosomal subunit protein bL32 (60 aa).

Over residues 1–20 (MACPKKKTSKSKRSMRRAAW) the composition is skewed to basic residues. Residues 1-22 (MACPKKKTSKSKRSMRRAAWKR) form a disordered region.

This sequence belongs to the bacterial ribosomal protein bL32 family.

This Thermosynechococcus vestitus (strain NIES-2133 / IAM M-273 / BP-1) protein is Large ribosomal subunit protein bL32.